The chain runs to 453 residues: Chromosomal replication initiator protein DnaA (453 aa).

Residues 1-73 (MELSPQDLWT…ADVVEEILGY (73 aa)) are domain I, interacts with DnaA modulators. The domain II stretch occupies residues 73-110 (YSIDIQLTSTQGENIAIVGETQVSAYYPTLSGEHPKPI). The interval 111 to 327 (KLNPKYTFSR…GALIRAITYI (217 aa)) is domain III, AAA+ region. ATP-binding residues include Gly-155, Gly-157, Lys-158, and Thr-159. Residues 328-453 (SISGLSMTVE…HLASRTQKTT (126 aa)) are domain IV, binds dsDNA.

This sequence belongs to the DnaA family. In terms of assembly, oligomerizes as a right-handed, spiral filament on DNA at oriC.

The protein localises to the cytoplasm. Functionally, plays an essential role in the initiation and regulation of chromosomal replication. ATP-DnaA binds to the origin of replication (oriC) to initiate formation of the DNA replication initiation complex once per cell cycle. Binds the DnaA box (a 9 base pair repeat at the origin) and separates the double-stranded (ds)DNA. Forms a right-handed helical filament on oriC DNA; dsDNA binds to the exterior of the filament while single-stranded (ss)DNA is stabiized in the filament's interior. The ATP-DnaA-oriC complex binds and stabilizes one strand of the AT-rich DNA unwinding element (DUE), permitting loading of DNA polymerase. After initiation quickly degrades to an ADP-DnaA complex that is not apt for DNA replication. Binds acidic phospholipids. This chain is Chromosomal replication initiator protein DnaA, found in Gloeothece citriformis (strain PCC 7424) (Cyanothece sp. (strain PCC 7424)).